The chain runs to 113 residues: MQAKAVARTVRIAPRKARLVIDLIRGKEVGERFAILRHTPKAASPIIEKVLKSAVANAEHNYDMDVNNLVISQAYVDEGPTLKRFRPRAMGRASAINKRTSHITIVVSEKKEG.

This sequence belongs to the universal ribosomal protein uL22 family. As to quaternary structure, part of the 50S ribosomal subunit.

In terms of biological role, this protein binds specifically to 23S rRNA; its binding is stimulated by other ribosomal proteins, e.g. L4, L17, and L20. It is important during the early stages of 50S assembly. It makes multiple contacts with different domains of the 23S rRNA in the assembled 50S subunit and ribosome. Functionally, the globular domain of the protein is located near the polypeptide exit tunnel on the outside of the subunit, while an extended beta-hairpin is found that lines the wall of the exit tunnel in the center of the 70S ribosome. This is Large ribosomal subunit protein uL22 from Geobacillus stearothermophilus (Bacillus stearothermophilus).